Here is a 483-residue protein sequence, read N- to C-terminus: Cysteine proteinase 1, mitochondrial (483 aa).

A mitochondrion-targeting transit peptide spans 1-30 (MLPTSVSRSLYLKTFRSHLLRAPQIVLKRM). Residues C102, H398, and N421 contribute to the active site. A propeptide (removed in mature form; by autocatalysis) is located at residue K483.

It belongs to the peptidase C1 family. In terms of assembly, homohexamer. Binds to nucleic acids. Binds single-stranded DNA and RNA with higher affinity than double-stranded DNA. The N-terminus of isoform Cytoplasmic is blocked.

The protein localises to the mitochondrion. Its subcellular location is the cytoplasm. The enzyme catalyses Inactivates bleomycin B2 (a cytotoxic glycometallopeptide) by hydrolysis of a carboxyamide bond of beta-aminoalanine, but also shows general aminopeptidase activity. The specificity varies somewhat with source, but amino acid arylamides of Met, Leu and Ala are preferred.. Its activity is regulated as follows. Inhibited by E64, a specific inhibitor of cysteine proteases, N-ethylmaleimide, iodacetamide, and mercury and zinc ions. In terms of biological role, the normal physiological role of the enzyme is unknown, but it is not essential for the viability of yeast cells. Has aminopeptidase activity, shortening substrate peptides sequentially by 1 amino acid. Has bleomycin hydrolase activity, which can protect the cell from the toxic effects of bleomycin. Has homocysteine-thiolactonase activity, protecting the cell against homocysteine toxicity. Acts as a repressor in the GAL4 regulatory system, but this does not require either the peptidase or nucleic acid-binding activities. In Saccharomyces cerevisiae (strain AWRI1631) (Baker's yeast), this protein is Cysteine proteinase 1, mitochondrial (LAP3).